A 55-amino-acid polypeptide reads, in one-letter code: MPKTIVREEETIEETLRRFKREVSKSGNLAAARKKEYYIKPSVEKKNRRNKMSLR.

This sequence belongs to the bacterial ribosomal protein bS21 family.

This is Small ribosomal subunit protein bS21 from Phytoplasma mali (strain AT).